Here is a 309-residue protein sequence, read N- to C-terminus: MEIILANPRGFCAGVDRAISIVERALDLFGAPIYVRHEVVHNKFVVDGLKDRGAIFVDELDEVPDDNTVIFSAHGVSKAVRQEAKTRALKVFDATCPLVTKVHMEVSRVSRKDIECILIGHAGHPEVEGTMGQYSSDSAGIYLVESPEDVASLVVKNPEKLYFCSQTTLSVDDTMDVIAALQAKFPLIEGPRKDDICYATQNRQDAVREIADKVDLMLVVGAKNSSNSNRLKELASKMGVTSYLIDTAENIETDWLTGVNKVGVTAGASAPAVLIKQVVEALKSYGGHQVIEHPGKEESIVFAVPAELR.

Cys12 contacts [4Fe-4S] cluster. (2E)-4-hydroxy-3-methylbut-2-enyl diphosphate contacts are provided by His41 and His74. His41 and His74 together coordinate dimethylallyl diphosphate. Isopentenyl diphosphate contacts are provided by His41 and His74. Cys96 is a binding site for [4Fe-4S] cluster. His124 is a binding site for (2E)-4-hydroxy-3-methylbut-2-enyl diphosphate. His124 serves as a coordination point for dimethylallyl diphosphate. Residue His124 participates in isopentenyl diphosphate binding. Catalysis depends on Glu126, which acts as the Proton donor. Residue Thr167 participates in (2E)-4-hydroxy-3-methylbut-2-enyl diphosphate binding. Residue Cys197 participates in [4Fe-4S] cluster binding. Residues Ser225, Ser226, Asn227, and Ser269 each coordinate (2E)-4-hydroxy-3-methylbut-2-enyl diphosphate. Ser225, Ser226, Asn227, and Ser269 together coordinate dimethylallyl diphosphate. Positions 225, 226, 227, and 269 each coordinate isopentenyl diphosphate.

Belongs to the IspH family. It depends on [4Fe-4S] cluster as a cofactor.

The enzyme catalyses isopentenyl diphosphate + 2 oxidized [2Fe-2S]-[ferredoxin] + H2O = (2E)-4-hydroxy-3-methylbut-2-enyl diphosphate + 2 reduced [2Fe-2S]-[ferredoxin] + 2 H(+). It carries out the reaction dimethylallyl diphosphate + 2 oxidized [2Fe-2S]-[ferredoxin] + H2O = (2E)-4-hydroxy-3-methylbut-2-enyl diphosphate + 2 reduced [2Fe-2S]-[ferredoxin] + 2 H(+). The protein operates within isoprenoid biosynthesis; dimethylallyl diphosphate biosynthesis; dimethylallyl diphosphate from (2E)-4-hydroxy-3-methylbutenyl diphosphate: step 1/1. Its pathway is isoprenoid biosynthesis; isopentenyl diphosphate biosynthesis via DXP pathway; isopentenyl diphosphate from 1-deoxy-D-xylulose 5-phosphate: step 6/6. Its function is as follows. Catalyzes the conversion of 1-hydroxy-2-methyl-2-(E)-butenyl 4-diphosphate (HMBPP) into a mixture of isopentenyl diphosphate (IPP) and dimethylallyl diphosphate (DMAPP). Acts in the terminal step of the DOXP/MEP pathway for isoprenoid precursor biosynthesis. In Colwellia psychrerythraea (strain 34H / ATCC BAA-681) (Vibrio psychroerythus), this protein is 4-hydroxy-3-methylbut-2-enyl diphosphate reductase.